We begin with the raw amino-acid sequence, 459 residues long: Pentatricopeptide repeat-containing protein At1g07740, mitochondrial (459 aa).

Residues 1–20 constitute a mitochondrion transit peptide; that stretch reads MRRRLSSVLINNQCIASQRH. Positions 19–41 are disordered; that stretch reads RHYHTSRPEKPTKKASSHEPTHK. Positions 24–41 are enriched in basic and acidic residues; that stretch reads SRPEKPTKKASSHEPTHK. 10 PPR repeats span residues 80–114, 115–149, 150–184, 185–219, 220–254, 255–289, 290–324, 325–359, 360–394, and 395–429; these read DYPS…NVRC, RESL…DCVR, TIQS…RLRP, NSVS…EVQP, SVVT…RIRP, NAVT…GCKP, GLVN…RIKP, DVVI…GCKP, NAAT…RHCP, and TPAT…NLSF.

The protein belongs to the PPR family. P subfamily.

Its subcellular location is the mitochondrion. In Arabidopsis thaliana (Mouse-ear cress), this protein is Pentatricopeptide repeat-containing protein At1g07740, mitochondrial.